A 513-amino-acid polypeptide reads, in one-letter code: Alpha-1B-glycoprotein (513 aa).

Positions 1 to 20 (MSLLTTVLLLWGFTLGPGNA) are cleaved as a signal peptide. Ig-like V-type domains lie at 22–126 (WLDS…VTGK), 127–219 (EPLP…MSAT), 220–312 (QLPP…PVEL), 313–415 (MWSD…LRIN), and 416–513 (GPAP…VEGS). N-linked (GlcNAc...) asparagine glycans are attached at residues N44, N89, and N192. 5 disulfides stabilise this stretch: C49–C96, C153–C195, C245–C292, C343–C392, and C441–C488. 4 N-linked (GlcNAc...) asparagine glycosylation sites follow: N369, N381, N389, and N485.

Interacts with CRISP3. Isoform 1 is expressed in normal liver. Isoform 2 is expressed in the regenerating liver after partial hepatectomy and at very low levels in the normal lung, brain and testis.

The protein localises to the secreted. The protein is Alpha-1B-glycoprotein of Rattus norvegicus (Rat).